The sequence spans 903 residues: E3 ubiquitin-protein ligase DDB_G0292642 (903 aa).

Disordered regions lie at residues 115–137 (FTLP…SSSD), 167–236 (LLKR…VIGS), 284–366 (VNKT…NNLK), 415–487 (TPSL…TTEI), and 549–576 (DDSE…GSEG). 2 stretches are compositionally biased toward low complexity: residues 120–130 (TTNNNNNNTTN) and 178–216 (TTTT…TIDT). The segment covering 217 to 232 (SSEDDDESISSSDDDI) has biased composition (acidic residues). 2 stretches are compositionally biased toward low complexity: residues 287–301 (TSTT…TTTT) and 311–323 (NRNN…NNNN). A coiled-coil region spans residues 313 to 352 (NNNNNNNNNNNKRFEIESEEESETDISSEEEENNNNNNNN). Residues 329-345 (ESEEESETDISSEEEEN) are compositionally biased toward acidic residues. The segment covering 346–364 (NNNNNNNSNNNNNSNNNNN) has biased composition (low complexity). Residues 415–427 (TPSLRLSSAHLPN) are compositionally biased toward polar residues. The span at 428-443 (TTTTTTTTTTTTTTTT) shows a compositional bias: low complexity. Acidic residues-rich tracts occupy residues 451–466 (NDDD…DSEI) and 549–568 (DDSE…ESDS). Positions 542 to 569 (AELVFEYDDSEEEEEEEEEEEGEESDSE) form a coiled coil. The TRIAD supradomain stretch occupies residues 612 to 832 (EPVECKICYM…NEYPECFDRQ (221 aa)). Zn(2+) contacts are provided by Cys-616, Cys-619, Cys-634, His-636, Cys-639, Cys-642, Cys-661, Cys-666, Cys-704, Cys-709, Cys-725, Cys-728, Cys-733, Cys-736, His-741, Cys-746, Cys-782, and Cys-785. The RING-type 1 zinc-finger motif lies at 616 to 666 (CKICYMEYDQSNEVFTLECDHVYCFDCITEHLRILITEGRVLDISCPHPQC). The IBR-type zinc-finger motif lies at 683–746 (NWLKYQKFSM…GEYSHEGAKC (64 aa)). The segment at 782 to 811 (CPTCKSHIEKHDGCNHMTCINCQHQFCWLC) adopts an RING-type 2; atypical zinc-finger fold. The active site involves Cys-795. Positions 800, 803, 808, 811, 819, and 828 each coordinate Zn(2+). Residues 864–884 (TAAFTVGAPLLLIGGAVLLCV) form a helical membrane-spanning segment.

It belongs to the RBR family. RNF14 subfamily.

The protein localises to the membrane. It catalyses the reaction [E2 ubiquitin-conjugating enzyme]-S-ubiquitinyl-L-cysteine + [acceptor protein]-L-lysine = [E2 ubiquitin-conjugating enzyme]-L-cysteine + [acceptor protein]-N(6)-ubiquitinyl-L-lysine.. The protein operates within protein modification; protein ubiquitination. In terms of biological role, E3 ubiquitin-protein ligase. This chain is E3 ubiquitin-protein ligase DDB_G0292642, found in Dictyostelium discoideum (Social amoeba).